We begin with the raw amino-acid sequence, 442 residues long: Histidine--tRNA ligase (442 aa).

This sequence belongs to the class-II aminoacyl-tRNA synthetase family. As to quaternary structure, homodimer.

It is found in the cytoplasm. The enzyme catalyses tRNA(His) + L-histidine + ATP = L-histidyl-tRNA(His) + AMP + diphosphate + H(+). This Helicobacter hepaticus (strain ATCC 51449 / 3B1) protein is Histidine--tRNA ligase.